A 481-amino-acid chain; its full sequence is Bifunctional protein GlmU (481 aa).

The tract at residues 1–235 is pyrophosphorylase; sequence MTHKERPLDV…PDEVMGANDR (235 aa). UDP-N-acetyl-alpha-D-glucosamine-binding positions include 13-16, Lys-27, Gln-78, 83-84, 107-109, Gly-146, Glu-161, Asn-176, and Asn-233; these read LAAG, GT, and YGD. Residue Asp-109 participates in Mg(2+) binding. Asn-233 provides a ligand contact to Mg(2+). The linker stretch occupies residues 236-256; the sequence is VQLAQAAAVLRRRINTAHMQA. Residues 257–481 are N-acetyltransferase; that stretch reads GVTLQDPSTI…PWLAGWLERQ (225 aa). Residues Arg-339 and Lys-357 each contribute to the UDP-N-acetyl-alpha-D-glucosamine site. His-369 (proton acceptor) is an active-site residue. Positions 372 and 383 each coordinate UDP-N-acetyl-alpha-D-glucosamine. Residues Ala-386, Ser-411, Ala-429, and Arg-446 each coordinate acetyl-CoA.

The protein in the N-terminal section; belongs to the N-acetylglucosamine-1-phosphate uridyltransferase family. In the C-terminal section; belongs to the transferase hexapeptide repeat family. As to quaternary structure, homotrimer. Mg(2+) serves as cofactor.

Its subcellular location is the cytoplasm. The enzyme catalyses alpha-D-glucosamine 1-phosphate + acetyl-CoA = N-acetyl-alpha-D-glucosamine 1-phosphate + CoA + H(+). The catalysed reaction is N-acetyl-alpha-D-glucosamine 1-phosphate + UTP + H(+) = UDP-N-acetyl-alpha-D-glucosamine + diphosphate. It functions in the pathway nucleotide-sugar biosynthesis; UDP-N-acetyl-alpha-D-glucosamine biosynthesis; N-acetyl-alpha-D-glucosamine 1-phosphate from alpha-D-glucosamine 6-phosphate (route II): step 2/2. The protein operates within nucleotide-sugar biosynthesis; UDP-N-acetyl-alpha-D-glucosamine biosynthesis; UDP-N-acetyl-alpha-D-glucosamine from N-acetyl-alpha-D-glucosamine 1-phosphate: step 1/1. Its pathway is bacterial outer membrane biogenesis; LPS lipid A biosynthesis. Catalyzes the last two sequential reactions in the de novo biosynthetic pathway for UDP-N-acetylglucosamine (UDP-GlcNAc). The C-terminal domain catalyzes the transfer of acetyl group from acetyl coenzyme A to glucosamine-1-phosphate (GlcN-1-P) to produce N-acetylglucosamine-1-phosphate (GlcNAc-1-P), which is converted into UDP-GlcNAc by the transfer of uridine 5-monophosphate (from uridine 5-triphosphate), a reaction catalyzed by the N-terminal domain. This Deinococcus geothermalis (strain DSM 11300 / CIP 105573 / AG-3a) protein is Bifunctional protein GlmU.